The sequence spans 141 residues: Arsenate reductase (141 aa).

The active-site Nucleophile; cysteine thioarsenate intermediate is the cysteine 12.

Belongs to the ArsC family. In terms of assembly, monomer in solution.

It carries out the reaction [glutaredoxin]-dithiol + arsenate + glutathione + H(+) = glutathionyl-S-S-[glutaredoxin] + arsenite + H2O. Inhibited by the thiol reagents iodoacetate (IAA) and N-ethylmaleimide (NEM). Activity is rapidly inactivated by the histidine-modifying reagent diethylpyrocarbonate (DEPC). Involved in resistance to arsenate. Catalyzes the reduction of arsenate [As(V)] to arsenite [As(III)]. The resulting arsenite is then extruded from the cell via the ArsAB transport system. This is Arsenate reductase from Escherichia coli.